Reading from the N-terminus, the 619-residue chain is Chaperone protein DnaK (619 aa).

Threonine 175 carries the phosphothreonine; by autocatalysis modification. A disordered region spans residues 578 to 619 (NGGAQGQGFDPNNMGGANAGAGATNNNDDNVVDADFEVQDDK). Residues 589-606 (NNMGGANAGAGATNNNDD) show a composition bias toward low complexity. Over residues 607–619 (NVVDADFEVQDDK) the composition is skewed to acidic residues.

Belongs to the heat shock protein 70 family.

Functionally, acts as a chaperone. In Clostridium perfringens (strain ATCC 13124 / DSM 756 / JCM 1290 / NCIMB 6125 / NCTC 8237 / Type A), this protein is Chaperone protein DnaK.